Here is a 123-residue protein sequence, read N- to C-terminus: Large ribosomal subunit protein uL14c (123 aa).

The protein belongs to the universal ribosomal protein uL14 family. As to quaternary structure, part of the 50S ribosomal subunit.

Its subcellular location is the plastid. The protein localises to the chloroplast. Binds to 23S rRNA. In Saccharum hybrid (Sugarcane), this protein is Large ribosomal subunit protein uL14c.